The sequence spans 227 residues: Enolase-phosphatase E1 (227 aa).

The protein belongs to the HAD-like hydrolase superfamily. MasA/MtnC family. In terms of assembly, monomer. It depends on Mg(2+) as a cofactor.

It carries out the reaction 5-methylsulfanyl-2,3-dioxopentyl phosphate + H2O = 1,2-dihydroxy-5-(methylsulfanyl)pent-1-en-3-one + phosphate. It participates in amino-acid biosynthesis; L-methionine biosynthesis via salvage pathway; L-methionine from S-methyl-5-thio-alpha-D-ribose 1-phosphate: step 3/6. It functions in the pathway amino-acid biosynthesis; L-methionine biosynthesis via salvage pathway; L-methionine from S-methyl-5-thio-alpha-D-ribose 1-phosphate: step 4/6. Bifunctional enzyme that catalyzes the enolization of 2,3-diketo-5-methylthiopentyl-1-phosphate (DK-MTP-1-P) into the intermediate 2-hydroxy-3-keto-5-methylthiopentenyl-1-phosphate (HK-MTPenyl-1-P), which is then dephosphorylated to form the acireductone 1,2-dihydroxy-3-keto-5-methylthiopentene (DHK-MTPene). This is Enolase-phosphatase E1 from Pseudomonas syringae pv. syringae (strain B728a).